We begin with the raw amino-acid sequence, 230 residues long: Small ribosomal subunit protein uS3 (230 aa).

In terms of domain architecture, KH type-2 spans 39–107 (VRKFLVEKLQ…PAQINIAEIR (69 aa)).

The protein belongs to the universal ribosomal protein uS3 family. Part of the 30S ribosomal subunit. Forms a tight complex with proteins S10 and S14.

Its function is as follows. Binds the lower part of the 30S subunit head. Binds mRNA in the 70S ribosome, positioning it for translation. The chain is Small ribosomal subunit protein uS3 from Shewanella putrefaciens (strain CN-32 / ATCC BAA-453).